We begin with the raw amino-acid sequence, 387 residues long: Cysteine desulfurase (387 aa).

Pyridoxal 5'-phosphate contacts are provided by residues 72–73 (GT), Asn152, Gln180, and 200–202 (SAH). At Lys203 the chain carries N6-(pyridoxal phosphate)lysine. Thr238 lines the pyridoxal 5'-phosphate pocket. Cys326 functions as the Cysteine persulfide intermediate in the catalytic mechanism. Position 326 (Cys326) interacts with [2Fe-2S] cluster.

This sequence belongs to the class-V pyridoxal-phosphate-dependent aminotransferase family. NifS/IscS subfamily. As to quaternary structure, homodimer. Requires pyridoxal 5'-phosphate as cofactor.

It catalyses the reaction (sulfur carrier)-H + L-cysteine = (sulfur carrier)-SH + L-alanine. Its function is as follows. Catalyzes the removal of elemental sulfur atoms from cysteine to produce alanine. Seems to participate in the biosynthesis of the nitrogenase metalloclusters by providing the inorganic sulfur required for the Fe-S core formation. The protein is Cysteine desulfurase of Sinorhizobium fredii (strain NBRC 101917 / NGR234).